The sequence spans 229 residues: 7-cyano-7-deazaguanine synthase (229 aa).

Residue 8-18 participates in ATP binding; it reads CSGGLDSSVIA. Zn(2+) is bound by residues Cys190, Cys203, Cys206, and Cys209.

The protein belongs to the QueC family. Zn(2+) serves as cofactor.

The enzyme catalyses 7-carboxy-7-deazaguanine + NH4(+) + ATP = 7-cyano-7-deazaguanine + ADP + phosphate + H2O + H(+). Its pathway is purine metabolism; 7-cyano-7-deazaguanine biosynthesis. Catalyzes the ATP-dependent conversion of 7-carboxy-7-deazaguanine (CDG) to 7-cyano-7-deazaguanine (preQ(0)). This is 7-cyano-7-deazaguanine synthase from Methanopyrus kandleri (strain AV19 / DSM 6324 / JCM 9639 / NBRC 100938).